Consider the following 341-residue polypeptide: Cytochrome c biogenesis protein CcsA (341 aa).

The next 8 membrane-spanning stretches (helical) occupy residues 16-36 (LILLLTMLIYWAGAAFPGMSI), 37-57 (LPTLGTAGVAIANLSIATLLG), 68-88 (LSNLYESLFFLAWGVTAVHLI), 97-117 (LVGVVTTPVAMGITAFAALSL), 142-162 (VMMLSYATLMVGAVLAIAFLI), 249-269 (IIGLGFPLLTIGIIAGAVWAN), 276-296 (WSWDPKETWALITWLVFAAYL), and 310-330 (AILAASGFIVVWVCYLGVNLL).

The protein belongs to the CcmF/CycK/Ccl1/NrfE/CcsA family. May interact with ccs1.

It is found in the cellular thylakoid membrane. In terms of biological role, required during biogenesis of c-type cytochromes (cytochrome c6 and cytochrome f) at the step of heme attachment. The protein is Cytochrome c biogenesis protein CcsA of Rippkaea orientalis (strain PCC 8801 / RF-1) (Cyanothece sp. (strain PCC 8801)).